Here is a 359-residue protein sequence, read N- to C-terminus: Biotin synthase (359 aa).

A Radical SAM core domain is found at His47 to Arg276. Positions 65, 69, and 72 each coordinate [4Fe-4S] cluster. [2Fe-2S] cluster-binding residues include Cys109, Cys141, Cys201, and Arg271. The segment at Glu320 to Gly359 is disordered.

This sequence belongs to the radical SAM superfamily. Biotin synthase family. Homodimer. [4Fe-4S] cluster is required as a cofactor. [2Fe-2S] cluster serves as cofactor.

It carries out the reaction (4R,5S)-dethiobiotin + (sulfur carrier)-SH + 2 reduced [2Fe-2S]-[ferredoxin] + 2 S-adenosyl-L-methionine = (sulfur carrier)-H + biotin + 2 5'-deoxyadenosine + 2 L-methionine + 2 oxidized [2Fe-2S]-[ferredoxin]. It functions in the pathway cofactor biosynthesis; biotin biosynthesis; biotin from 7,8-diaminononanoate: step 2/2. Catalyzes the conversion of dethiobiotin (DTB) to biotin by the insertion of a sulfur atom into dethiobiotin via a radical-based mechanism. This chain is Biotin synthase, found in Salinibacter ruber (strain DSM 13855 / M31).